Reading from the N-terminus, the 306-residue chain is UDP-3-O-acyl-N-acetylglucosamine deacetylase (306 aa).

Residues His-79, His-238, and Asp-242 each contribute to the Zn(2+) site. His-265 acts as the Proton donor in catalysis.

Belongs to the LpxC family. Requires Zn(2+) as cofactor.

The enzyme catalyses a UDP-3-O-[(3R)-3-hydroxyacyl]-N-acetyl-alpha-D-glucosamine + H2O = a UDP-3-O-[(3R)-3-hydroxyacyl]-alpha-D-glucosamine + acetate. It participates in glycolipid biosynthesis; lipid IV(A) biosynthesis; lipid IV(A) from (3R)-3-hydroxytetradecanoyl-[acyl-carrier-protein] and UDP-N-acetyl-alpha-D-glucosamine: step 2/6. In terms of biological role, catalyzes the hydrolysis of UDP-3-O-myristoyl-N-acetylglucosamine to form UDP-3-O-myristoylglucosamine and acetate, the committed step in lipid A biosynthesis. This is UDP-3-O-acyl-N-acetylglucosamine deacetylase from Shewanella loihica (strain ATCC BAA-1088 / PV-4).